We begin with the raw amino-acid sequence, 144 residues long: MKIWIDADGCPVVDLTIRLSRGYEVFLVCDTAHQFNRAGATTITIGQGHDAVDFAIVNRMAPGDIVVTQDYGLAALALARKGQAIDQNGRVFTNENIDFLLHTRHVGQEIRRAGGRTKGPKKRTRQEDASFEQSFSRLLTEKTD.

Residues Ile-110–Asp-144 are disordered. Positions Ala-113–Thr-124 are enriched in basic residues.

Belongs to the UPF0178 family.

The sequence is that of UPF0178 protein Exig_1155 from Exiguobacterium sibiricum (strain DSM 17290 / CCUG 55495 / CIP 109462 / JCM 13490 / 255-15).